Here is a 203-residue protein sequence, read N- to C-terminus: Somatotropin (203 aa).

The N-terminal stretch at 1–17 (MDRVVLMLSVLSLGVSS) is a signal peptide. Gln-18 is modified (pyrrolidone carboxylic acid). His-36 provides a ligand contact to Zn(2+). Cysteines 68 and 176 form a disulfide. Glu-185 contributes to the Zn(2+) binding site. An intrachain disulfide couples Cys-193 to Cys-201.

It belongs to the somatotropin/prolactin family.

It localises to the secreted. Functionally, growth hormone plays an important role in growth control and is involved in the regulation of several anabolic processes. Implicated as an osmoregulatory substance important for seawater adaptation. This Pagrus major (Red sea bream) protein is Somatotropin (gh).